Here is a 136-residue protein sequence, read N- to C-terminus: uncharacterized protein (136 aa).

This is an uncharacterized protein from Bacillus subtilis (strain 168).